A 111-amino-acid chain; its full sequence is uncharacterized protein (111 aa).

The protein localises to the cytoplasm. It localises to the nucleus. This is an uncharacterized protein from Schizosaccharomyces pombe (strain 972 / ATCC 24843) (Fission yeast).